Consider the following 621-residue polypeptide: 1-deoxy-D-xylulose-5-phosphate synthase (621 aa).

Residues H80 and 121 to 123 contribute to the thiamine diphosphate site; that span reads GHS. D152 contributes to the Mg(2+) binding site. Residues 153 to 154, N181, Y288, and E370 contribute to the thiamine diphosphate site; that span reads GA. N181 serves as a coordination point for Mg(2+).

This sequence belongs to the transketolase family. DXPS subfamily. Homodimer. It depends on Mg(2+) as a cofactor. Requires thiamine diphosphate as cofactor.

It carries out the reaction D-glyceraldehyde 3-phosphate + pyruvate + H(+) = 1-deoxy-D-xylulose 5-phosphate + CO2. Its pathway is metabolic intermediate biosynthesis; 1-deoxy-D-xylulose 5-phosphate biosynthesis; 1-deoxy-D-xylulose 5-phosphate from D-glyceraldehyde 3-phosphate and pyruvate: step 1/1. Its function is as follows. Catalyzes the acyloin condensation reaction between C atoms 2 and 3 of pyruvate and glyceraldehyde 3-phosphate to yield 1-deoxy-D-xylulose-5-phosphate (DXP). In Shewanella woodyi (strain ATCC 51908 / MS32), this protein is 1-deoxy-D-xylulose-5-phosphate synthase.